The sequence spans 413 residues: S-adenosylmethionine synthase (413 aa).

His15 is an ATP binding site. Asp17 serves as a coordination point for Mg(2+). Glu43 is a K(+) binding site. Glu56 and Gln100 together coordinate L-methionine. Residues 100–110 (QSPDISQGVNE) form a flexible loop region. ATP contacts are provided by residues 171–173 (DGK), 248–249 (KF), Asp257, 263–264 (RK), Ala280, and Lys284. Asp257 serves as a coordination point for L-methionine. Lys288 is an L-methionine binding site.

This sequence belongs to the AdoMet synthase family. In terms of assembly, homotetramer; dimer of dimers. Mg(2+) serves as cofactor. It depends on K(+) as a cofactor.

The protein resides in the cytoplasm. It catalyses the reaction L-methionine + ATP + H2O = S-adenosyl-L-methionine + phosphate + diphosphate. It participates in amino-acid biosynthesis; S-adenosyl-L-methionine biosynthesis; S-adenosyl-L-methionine from L-methionine: step 1/1. Catalyzes the formation of S-adenosylmethionine (AdoMet) from methionine and ATP. The overall synthetic reaction is composed of two sequential steps, AdoMet formation and the subsequent tripolyphosphate hydrolysis which occurs prior to release of AdoMet from the enzyme. The protein is S-adenosylmethionine synthase of Prochlorococcus marinus (strain MIT 9215).